A 212-amino-acid chain; its full sequence is Ribosome maturation factor RimM (212 aa).

The 77-residue stretch at 105-181 (EEEFYYADLI…IDSITAGLDN (77 aa)) folds into the PRC barrel domain. A disordered region spans residues 181–212 (NAELSGEEDEAEGPESARGSRPRGPKSAGEPR).

Belongs to the RimM family. As to quaternary structure, binds ribosomal protein uS19.

The protein localises to the cytoplasm. An accessory protein needed during the final step in the assembly of 30S ribosomal subunit, possibly for assembly of the head region. Essential for efficient processing of 16S rRNA. May be needed both before and after RbfA during the maturation of 16S rRNA. It has affinity for free ribosomal 30S subunits but not for 70S ribosomes. This Chelativorans sp. (strain BNC1) protein is Ribosome maturation factor RimM.